Consider the following 230-residue polypeptide: Ribose-5-phosphate isomerase A (230 aa).

Residues 28–31 (TGST), 83–86 (DGAD), and 97–100 (KGLG) contribute to the substrate site. The Proton acceptor role is filled by glutamate 106. Lysine 124 provides a ligand contact to substrate.

It belongs to the ribose 5-phosphate isomerase family. In terms of assembly, homodimer.

It catalyses the reaction aldehydo-D-ribose 5-phosphate = D-ribulose 5-phosphate. It functions in the pathway carbohydrate degradation; pentose phosphate pathway; D-ribose 5-phosphate from D-ribulose 5-phosphate (non-oxidative stage): step 1/1. Functionally, catalyzes the reversible conversion of ribose-5-phosphate to ribulose 5-phosphate. In Gloeobacter violaceus (strain ATCC 29082 / PCC 7421), this protein is Ribose-5-phosphate isomerase A.